Consider the following 411-residue polypeptide: Serine hydroxymethyltransferase (411 aa).

Residues Leu-119 and 123–125 (GHL) contribute to the (6S)-5,6,7,8-tetrahydrofolate site. Lys-228 is subject to N6-(pyridoxal phosphate)lysine. Position 351-353 (351-353 (SPF)) interacts with (6S)-5,6,7,8-tetrahydrofolate.

The protein belongs to the SHMT family. In terms of assembly, homodimer. Pyridoxal 5'-phosphate serves as cofactor.

It localises to the cytoplasm. The enzyme catalyses (6R)-5,10-methylene-5,6,7,8-tetrahydrofolate + glycine + H2O = (6S)-5,6,7,8-tetrahydrofolate + L-serine. It functions in the pathway one-carbon metabolism; tetrahydrofolate interconversion. Its pathway is amino-acid biosynthesis; glycine biosynthesis; glycine from L-serine: step 1/1. In terms of biological role, catalyzes the reversible interconversion of serine and glycine with tetrahydrofolate (THF) serving as the one-carbon carrier. This reaction serves as the major source of one-carbon groups required for the biosynthesis of purines, thymidylate, methionine, and other important biomolecules. Also exhibits THF-independent aldolase activity toward beta-hydroxyamino acids, producing glycine and aldehydes, via a retro-aldol mechanism. The polypeptide is Serine hydroxymethyltransferase (Clostridium novyi (strain NT)).